The following is an 860-amino-acid chain: DNA mismatch repair protein MutS (860 aa).

Residue 625 to 632 participates in ATP binding; sequence GPNMGGKS.

The protein belongs to the DNA mismatch repair MutS family.

This protein is involved in the repair of mismatches in DNA. It is possible that it carries out the mismatch recognition step. This protein has a weak ATPase activity. In Aeromonas hydrophila subsp. hydrophila (strain ATCC 7966 / DSM 30187 / BCRC 13018 / CCUG 14551 / JCM 1027 / KCTC 2358 / NCIMB 9240 / NCTC 8049), this protein is DNA mismatch repair protein MutS.